The primary structure comprises 456 residues: MAGLQRLASHLPVGVMLPHNTTEAPGPHSAKQDSYEQGDSSQQSLKGHLRNNFQKQLLSNKELILDKVYTHPKWNTQTKARSYSYPHCTGISQQDPESDSQGQGNGLFYSSGPQSWYPKANNQDFIPFTKKRVGVDRAFPLKPMVHRKSCSTGEAGTDGDHNVYPRPPEPREFSSRNFGVRNQGNFSVVGTVLAATQAEKAVANFDRTEWVQIRRLEAAGESLEEEIRRKQILLRGKLKKTEEELRRIQTQKEQAKENENGELQKIILPRSRVKGNKSNTMYKPIFSPEFEFEEEFSRDRREDETWGRSQQNSGPFQFSDYRIQRLKRERLVASNNKIRDPVSEPSVEKFSPPSETPVGALQGSARNSSLSMAPDSSGSSGSIEEPQLGECSHCGRKFLSFRLERHSNICSRMRGSKRKVFDSSRARAKGTELEQYLNWKGPASAKAEPPQKSNWR.

2 disordered regions span residues 16–46 (MLPHNTTEAPGPHSAKQDSYEQGDSSQQSLK) and 85–113 (YPHCTGISQQDPESDSQGQGNGLFYSSGP). Polar residues-rich tracts occupy residues 35–46 (YEQGDSSQQSLK) and 90–102 (GISQQDPESDSQG). Positions 211–265 (VQIRRLEAAGESLEEEIRRKQILLRGKLKKTEEELRRIQTQKEQAKENENGELQK) form a coiled coil. Positions 336 to 388 (NKIRDPVSEPSVEKFSPPSETPVGALQGSARNSSLSMAPDSSGSSGSIEEPQL) are disordered. Low complexity predominate over residues 368 to 382 (SSLSMAPDSSGSSGS). Residues 387 to 416 (QLGECSHCGRKFLSFRLERHSNICSRMRGS) form a C2HC/C3H-type zinc finger. Positions 391, 394, 406, and 410 each coordinate Zn(2+).

Belongs to the ZC2HC1 family. Zn(2+) serves as cofactor.

The protein is Zinc finger C2HC domain-containing protein 1C (ZC2HC1C) of Homo sapiens (Human).